A 63-amino-acid chain; its full sequence is MVKGTTSFGKRGRNITHIRCRRCGHHSFNVRKGYCAHCGFGRSKRIRRYSWQNKKAVTRIRLV.

Cys-20, Cys-23, Cys-35, and Cys-38 together coordinate Zn(2+). The C4-type zinc finger occupies 20–38; the sequence is CRRCGHHSFNVRKGYCAHC.

It belongs to the eukaryotic ribosomal protein eL37 family. It depends on Zn(2+) as a cofactor.

Its function is as follows. Binds to the 23S rRNA. The polypeptide is Large ribosomal subunit protein eL37 (Thermofilum pendens (strain DSM 2475 / Hrk 5)).